The primary structure comprises 119 residues: MVSALITVAVIAWCAQLALGGWQISRFNRAFDTLCQQGRVGVGRSSGRFKPRVVVAIALDDQQRIVDTLFMKGLTVFARPQKIPAITGMHAGDLQPDVIFPHDPLSQNALSLALKLKRG.

Residues 23 to 29 constitute a DNA-binding region (H-T-H motif); it reads QISRFNR.

In terms of biological role, positive regulator for glucitol operon expression. The polypeptide is Glucitol operon activator protein (gutM) (Escherichia coli (strain K12)).